We begin with the raw amino-acid sequence, 207 residues long: Large ribosomal subunit protein uL4 (207 aa).

The segment at 45–78 (RQGTHAVKNRSAVSGGGRKPWRQKGTGRARQGSI) is disordered.

This sequence belongs to the universal ribosomal protein uL4 family. In terms of assembly, part of the 50S ribosomal subunit.

One of the primary rRNA binding proteins, this protein initially binds near the 5'-end of the 23S rRNA. It is important during the early stages of 50S assembly. It makes multiple contacts with different domains of the 23S rRNA in the assembled 50S subunit and ribosome. Functionally, forms part of the polypeptide exit tunnel. This is Large ribosomal subunit protein uL4 from Lacticaseibacillus paracasei (strain ATCC 334 / BCRC 17002 / CCUG 31169 / CIP 107868 / KCTC 3260 / NRRL B-441) (Lactobacillus paracasei).